A 231-amino-acid polypeptide reads, in one-letter code: Large ribosomal subunit protein uL1 (231 aa).

Belongs to the universal ribosomal protein uL1 family. Part of the 50S ribosomal subunit.

In terms of biological role, binds directly to 23S rRNA. The L1 stalk is quite mobile in the ribosome, and is involved in E site tRNA release. Functionally, protein L1 is also a translational repressor protein, it controls the translation of the L11 operon by binding to its mRNA. The polypeptide is Large ribosomal subunit protein uL1 (Cupriavidus pinatubonensis (strain JMP 134 / LMG 1197) (Cupriavidus necator (strain JMP 134))).